A 314-amino-acid chain; its full sequence is Chlorinase cctP2 (314 aa).

Residues 1-14 (MEGKTSRYQDEAHD) are compositionally biased toward basic and acidic residues. The interval 1 to 24 (MEGKTSRYQDEAHDSAGSFNEETE) is disordered. 2 consecutive short sequence motifs (HXXHC) follow at residues 150-154 (HALHC) and 177-181 (HIEHC).

This sequence belongs to the ustYa family.

Its pathway is mycotoxin biosynthesis. Chlorinase; part of the gene cluster that mediates the biosynthesis of the mycotoxin cyclochlorotine, a hepatotoxic and carcinogenic cyclic chlorinated pentapeptide. Within the pathway, cctP2 catalyzes the formation of isocyclochlorotine via dichlorination of the Pro from the isocyclotine skeleton. The NRPS cctN initially catalyzes the condensation of L-serine (Ser), Pro, L-2-aminobutyrate (2Abu), Ser, and beta-Phe in this order to produce isocyclotine. After the dichlorination of Pro2 catalyzed by cctP2 to produce isocyclochlorotine, the cctO-mediated transacylation of isocyclochlorotine can furnish cyclochlorotine. The subsequent hydroxylation of cyclochlorotine by cctR yields hydroxycyclochlorotine as the final product. CctP1 probably acts as a phenylalanine aminomutase and provides the uncommon building block beta-Phe. Furthermore, 2Abu can be synthesized from threonine by one of the threonine dehydratases and transaminases localized outside of the cluster. The functions of the remaining proteins encoded by the cluster, cctM and cctT, have not been identified yet. This chain is Chlorinase cctP2, found in Talaromyces islandicus (Penicillium islandicum).